The chain runs to 681 residues: Transmembrane protein 168-A (681 aa).

9 helical membrane passes run 16–36, 47–67, 73–93, 135–155, 156–176, 184–204, 252–272, 281–301, and 346–365; these read FLRC…CLGM, MILV…ILYY, SASL…LCFL, PVVI…ASIS, LVFD…ALII, LALP…FQSL, FSLF…AFKL, VIPG…VFLV, and LVLF…WQVA. Residue Asn-517 is glycosylated (N-linked (GlcNAc...) asparagine).

This sequence belongs to the TMEM168 family.

Its subcellular location is the nucleus membrane. In terms of biological role, plays a key role in maintaining the cardiac electrical stability by modulating cell surface expression of SCN5A. The polypeptide is Transmembrane protein 168-A (tmem168a) (Danio rerio (Zebrafish)).